A 397-amino-acid chain; its full sequence is Protein Mx1 (397 aa).

This sequence belongs to the TRAFAC class dynamin-like GTPase superfamily. Dynamin/Fzo/YdjA family.

This Mus musculus (Mouse) protein is Protein Mx1 (Mx1).